Reading from the N-terminus, the 465-residue chain is Keratin, type I cytoskeletal 13 (465 aa).

Positions 1–28 are enriched in polar residues; that stretch reads MNFTSFSITQGSRPQPPSTRGFSGNSFK. Residues 1–47 are disordered; sequence MNFTSFSITQGSRPQPPSTRGFSGNSFKSDLIPQSRRSHSVYGTPGS. Residues 1-98 form a head region; the sequence is MNFTSFSITQ…SGGSDLLLGT (98 aa). A coil 1A region spans residues 99-135; that stretch reads SGKEAMQNLNDRLASYLEKVRSLEERNRELEQKIREW. One can recognise an IF rod domain in the interval 100–412; that stretch reads GKEAMQNLND…ILLEGDEGKF (313 aa). Positions 136-154 are linker 1; that stretch reads YEKQGAGTKTKDFSHYFKI. The tract at residues 155 to 246 is coil 1B; that stretch reads IADLQKQIHD…KSHDEEMKAL (92 aa). Positions 247 to 269 are linker 12; it reads RSQLGGQVNVEVDAAPAEDLTKK. A coil 2 region spans residues 270–408; that stretch reads LERMRQQYEQ…RTYRILLEGD (139 aa). Residues 409–465 form a tail region; that stretch reads EGKFQTSPHHPSIVTKQTETVVTPVVITNVKTVVEEIIDGKIVSKKEYPGPPEKLMI.

This sequence belongs to the intermediate filament family. Heterotetramer of two type I and two type II keratins. In terms of tissue distribution, expressed in skin.

Functionally, type 1 keratin. May maintain oral mucosal cell homeostasis and tissue organization in response to mechanical stress. The protein is Keratin, type I cytoskeletal 13 (KRT13) of Protopterus aethiopicus (Marbled lungfish).